The primary structure comprises 92 residues: Muscle LIM protein 1 (92 aa).

The 52-residue stretch at 11 to 62 (CPACGKSVYAAEERVAGGYKFHKTCFKCSMCNKALDSTNCTEHEKELFCKNC) folds into the LIM zinc-binding domain. The Nuclear localization signal motif lies at 65–70 (RKYGPK).

In the embryo, expression is restricted to the somatic, visceral, and pharyngeal muscles. Within the somatic musculature, MLP60 is distributed throughout the muscle fibers. There is no expression in cardiac mesoderm or in fat body.

It localises to the cytoplasm. The protein resides in the nucleus. In terms of biological role, positive regulator of myogenesis. This Drosophila melanogaster (Fruit fly) protein is Muscle LIM protein 1 (Mlp60A).